Reading from the N-terminus, the 440-residue chain is Trigger factor (440 aa).

Positions Gly163–Pro248 constitute a PPIase FKBP-type domain.

Belongs to the FKBP-type PPIase family. Tig subfamily.

The protein resides in the cytoplasm. It catalyses the reaction [protein]-peptidylproline (omega=180) = [protein]-peptidylproline (omega=0). In terms of biological role, involved in protein export. Acts as a chaperone by maintaining the newly synthesized protein in an open conformation. Functions as a peptidyl-prolyl cis-trans isomerase. This Lactiplantibacillus plantarum (strain ATCC BAA-793 / NCIMB 8826 / WCFS1) (Lactobacillus plantarum) protein is Trigger factor.